Consider the following 279-residue polypeptide: 3-methyl-2-oxobutanoate hydroxymethyltransferase (279 aa).

Positions 44 and 83 each coordinate Mg(2+). 3-methyl-2-oxobutanoate contacts are provided by residues 44–45 (DS), aspartate 83, and lysine 112. Glutamate 114 contacts Mg(2+). Glutamate 180 (proton acceptor) is an active-site residue.

Belongs to the PanB family. In terms of assembly, homodecamer; pentamer of dimers. It depends on Mg(2+) as a cofactor.

It is found in the cytoplasm. It catalyses the reaction 3-methyl-2-oxobutanoate + (6R)-5,10-methylene-5,6,7,8-tetrahydrofolate + H2O = 2-dehydropantoate + (6S)-5,6,7,8-tetrahydrofolate. It participates in cofactor biosynthesis; (R)-pantothenate biosynthesis; (R)-pantoate from 3-methyl-2-oxobutanoate: step 1/2. Functionally, catalyzes the reversible reaction in which hydroxymethyl group from 5,10-methylenetetrahydrofolate is transferred onto alpha-ketoisovalerate to form ketopantoate. The polypeptide is 3-methyl-2-oxobutanoate hydroxymethyltransferase (Chloroflexus aggregans (strain MD-66 / DSM 9485)).